The primary structure comprises 877 residues: Phosphoenolpyruvate carboxylase (877 aa).

Catalysis depends on residues H138 and K543.

It belongs to the PEPCase type 1 family. The cofactor is Mg(2+).

The enzyme catalyses oxaloacetate + phosphate = phosphoenolpyruvate + hydrogencarbonate. Forms oxaloacetate, a four-carbon dicarboxylic acid source for the tricarboxylic acid cycle. This is Phosphoenolpyruvate carboxylase from Aeromonas hydrophila subsp. hydrophila (strain ATCC 7966 / DSM 30187 / BCRC 13018 / CCUG 14551 / JCM 1027 / KCTC 2358 / NCIMB 9240 / NCTC 8049).